Consider the following 88-residue polypeptide: MANSKSAKKRALQSEKRRQHNASRRSMLRSYVKKVIAAINAGDHKAATEAFNAAQPIVDRMATKGLIHKNKAARQKSRLNTKIKALAA.

The disordered stretch occupies residues 1-27 (MANSKSAKKRALQSEKRRQHNASRRSM).

This sequence belongs to the bacterial ribosomal protein bS20 family.

Binds directly to 16S ribosomal RNA. This chain is Small ribosomal subunit protein bS20, found in Shewanella sediminis (strain HAW-EB3).